The primary structure comprises 233 residues: Phosphoribosylaminoimidazole-succinocarboxamide synthase (233 aa).

The protein belongs to the SAICAR synthetase family.

The catalysed reaction is 5-amino-1-(5-phospho-D-ribosyl)imidazole-4-carboxylate + L-aspartate + ATP = (2S)-2-[5-amino-1-(5-phospho-beta-D-ribosyl)imidazole-4-carboxamido]succinate + ADP + phosphate + 2 H(+). It functions in the pathway purine metabolism; IMP biosynthesis via de novo pathway; 5-amino-1-(5-phospho-D-ribosyl)imidazole-4-carboxamide from 5-amino-1-(5-phospho-D-ribosyl)imidazole-4-carboxylate: step 1/2. In Staphylococcus saprophyticus subsp. saprophyticus (strain ATCC 15305 / DSM 20229 / NCIMB 8711 / NCTC 7292 / S-41), this protein is Phosphoribosylaminoimidazole-succinocarboxamide synthase.